Consider the following 172-residue polypeptide: MIDGDGYRLNVGIVICNNHGQVFWAKRYGQHSWQFPQGGIDDGESPEQAMFRELYEEVGLTKKDVKVIATSRHWLRYKLPKRLVRWDSQPVCIGQKQKWFLLRLECDESKINMQRGSSPEFDGWRWVSYWYPVRQVVSFKRDVYRRAMKEFASLAMPFKERKVKGKRNTHRG.

Residues 6–149 (GYRLNVGIVI…KRDVYRRAMK (144 aa)) enclose the Nudix hydrolase domain. The Nudix box motif lies at 38–59 (GGIDDGESPEQAMFRELYEEVG).

This sequence belongs to the Nudix hydrolase family. RppH subfamily. It depends on a divalent metal cation as a cofactor.

In terms of biological role, accelerates the degradation of transcripts by removing pyrophosphate from the 5'-end of triphosphorylated RNA, leading to a more labile monophosphorylated state that can stimulate subsequent ribonuclease cleavage. In Vibrio cholerae serotype O1 (strain ATCC 39315 / El Tor Inaba N16961), this protein is RNA pyrophosphohydrolase.